The chain runs to 364 residues: Developmentally-regulated GTP-binding protein 2 (364 aa).

Lys-21 is modified ((3S)-3-hydroxylysine). The OBG-type G domain maps to 63–288; the sequence is ARVALIGFPS…LLEMLWEYLA (226 aa). GTP contacts are provided by residues 69 to 76, 94 to 98, 115 to 118, 246 to 249, and 269 to 271; these read GFPSVGKS, FTTLT, DLPG, NKID, and SCG. Mg(2+) is bound by residues Ser-76 and Thr-96. In terms of domain architecture, TGS spans 288-363; the sequence is ALTCIYTKKR…EHEDVIQIVK (76 aa).

Belongs to the TRAFAC class OBG-HflX-like GTPase superfamily. OBG GTPase family. In terms of assembly, interacts with RWDD1; this interaction confers protection to polyubiquitination and proteolytic degradation. Interacts with JMJD7; this interaction is direct. Mg(2+) is required as a cofactor. In terms of processing, hydroxylated (with S stereochemistry) at C-3 of Lys-21 by JMJD7; this modification hinders trypsin-catalyzed proteolysis in vitro. Polyubiquitinated. As to expression, highest levels in skeletal muscle, heart and kidney. Low levels in colon, thymus, spleen, small intestine, lung and Leukocytes.

The protein localises to the nucleus. The protein resides in the cytoplasm. The enzyme catalyses GTP + H2O = GDP + phosphate + H(+). Catalyzes the conversion of GTP to GDP through hydrolysis of the gamma-phosphate bond in GTP. When hydroxylated at C-3 of 'Lys-21' by JMJD7, may bind to RNA and play a role in translation. The polypeptide is Developmentally-regulated GTP-binding protein 2 (Homo sapiens (Human)).